Here is a 58-residue protein sequence, read N- to C-terminus: Large ribosomal subunit protein bL32 (58 aa).

This sequence belongs to the bacterial ribosomal protein bL32 family.

The chain is Large ribosomal subunit protein bL32 from Anaplasma marginale (strain Florida).